We begin with the raw amino-acid sequence, 149 residues long: Conglutin delta 3 (149 aa).

Positions 1–22 (MAKLTILIALVAALVLVVHTSA) are cleaved as a signal peptide. 4 cysteine pairs are disulfide-bonded: C30/C98, C42/C86, C87/C134, and C100/C142.

This sequence belongs to the 2S seed storage albumins family. In terms of assembly, heterodimer of a small chain and a large chain; disulfide-linked.

The protein resides in the endoplasmic reticulum. This Lupinus angustifolius (Narrow-leaved blue lupine) protein is Conglutin delta 3.